The primary structure comprises 381 residues: MTLRYLTAGESHGPALVAIAEGFPAGLAVDFEAVDRDLRRRQKGYGRGGRMKIETDAAQFLAGLRGGLTTGAPIALAVWNKDHENWKDLVSPYARGGRKFTQVRPGHADLAGALKYGLDDARDVLERASARSTAVTVALGALAKALLSTLGVEVCSRVVAIGPREIRPDAPPTPAQRDAIEASDLHVDDEALAAEWRALIDAEKARGGSIGGAFDVYATGLPIGVGSHVHPDRRLDARLAGALCGVQAIRAVEIGDGTQVGRPGYEFHDAIHHDPARGFWRETNRAGGLEGGMTDGMPLRVRAYMKPIPTMLHPLATVDLATRAATQARYERSDVCAVPAAAVVGEAVVAWELANALLEKFGGDAVEDVRRAVEAYAARIR.

The NADP(+) site is built by Arg-41 and Arg-47. Residues 127-129 (RAS), 247-248 (QA), Gly-291, 306-310 (KPIPT), and Arg-332 contribute to the FMN site.

It belongs to the chorismate synthase family. As to quaternary structure, homotetramer. FMNH2 serves as cofactor.

The enzyme catalyses 5-O-(1-carboxyvinyl)-3-phosphoshikimate = chorismate + phosphate. Its pathway is metabolic intermediate biosynthesis; chorismate biosynthesis; chorismate from D-erythrose 4-phosphate and phosphoenolpyruvate: step 7/7. Its function is as follows. Catalyzes the anti-1,4-elimination of the C-3 phosphate and the C-6 proR hydrogen from 5-enolpyruvylshikimate-3-phosphate (EPSP) to yield chorismate, which is the branch point compound that serves as the starting substrate for the three terminal pathways of aromatic amino acid biosynthesis. This reaction introduces a second double bond into the aromatic ring system. The sequence is that of Chorismate synthase from Anaeromyxobacter sp. (strain K).